Consider the following 69-residue polypeptide: Large ribosomal subunit protein uL29 (69 aa).

This sequence belongs to the universal ribosomal protein uL29 family.

This Rhodopseudomonas palustris (strain BisB5) protein is Large ribosomal subunit protein uL29.